The sequence spans 648 residues: Biosynthetic arginine decarboxylase (648 aa).

Lys109 carries the N6-(pyridoxal phosphate)lysine modification. 291 to 301 (LDVGGGLGVDY) is a substrate binding site.

Belongs to the Orn/Lys/Arg decarboxylase class-II family. SpeA subfamily. Mg(2+) serves as cofactor. Requires pyridoxal 5'-phosphate as cofactor.

It carries out the reaction L-arginine + H(+) = agmatine + CO2. Functionally, catalyzes the biosynthesis of agmatine from arginine. This Prochlorococcus marinus (strain SARG / CCMP1375 / SS120) protein is Biosynthetic arginine decarboxylase.